The sequence spans 101 residues: MGTRLLPALFLVLLVLGFEVQGTQQPQQDEMPSPTFLTQVKESLSSYWESAKTAAQNLYEKTYLPAVDEKLRDLYSKSTAAMSTYTGIFTDQVLSVLKGEE.

A signal peptide spans 1–22; sequence MGTRLLPALFLVLLVLGFEVQG. Residues 23–38 form an O-glycosylated at one site region; that stretch reads TQQPQQDEMPSPTFLT. A lipid binding region spans residues 66–74; that stretch reads AVDEKLRDL. The tract at residues 78–101 is lipoprotein lipase cofactor; the sequence is STAAMSTYTGIFTDQVLSVLKGEE.

Belongs to the apolipoprotein C2 family. In terms of processing, proapolipoprotein C-II is synthesized as a sialic acid containing glycoprotein which is subsequently desialylated prior to its proteolytic processing. Proapolipoprotein C-II, the major form found in plasma undergoes proteolytic cleavage of its N-terminal hexapeptide to generate apolipoprotein C-II, which occurs as the minor form in plasma. Liver and intestine.

The protein resides in the secreted. Functionally, component of chylomicrons, very low-density lipoproteins (VLDL), low-density lipoproteins (LDL), and high-density lipoproteins (HDL) in plasma. Plays an important role in lipoprotein metabolism as an activator of lipoprotein lipase. Both proapolipoprotein C-II and apolipoprotein C-II can activate lipoprotein lipase. In normolipidemic individuals, it is mainly distributed in the HDL, whereas in hypertriglyceridemic individuals, predominantly found in the VLDL and LDL. This Homo sapiens (Human) protein is Apolipoprotein C-II (APOC2).